Reading from the N-terminus, the 481-residue chain is Pentatricopeptide repeat-containing protein 8, mitochondrial (481 aa).

Residues 1-55 (MQGFGSQIFRKLLRSSNAKVSDALLQNTRTLFTAPPLHSGLQTSFTAETQQHVRQ) constitute a mitochondrion transit peptide. PPR repeat units lie at residues 137 to 172 (SARF…EFLP) and 365 to 399 (SIST…GLKP).

The protein localises to the mitochondrion. Functionally, mitochondrial RNA-binding protein involved in mitochondrial translation. The cox1 mRNA is one target but it is not clear if ppr8 has a single or multiple targets. The protein is Pentatricopeptide repeat-containing protein 8, mitochondrial (ppr8) of Schizosaccharomyces pombe (strain 972 / ATCC 24843) (Fission yeast).